The chain runs to 237 residues: Ly6/PLAUR domain-containing protein 8 (237 aa).

A signal peptide spans 1 to 19 (MKGILVAGITAVLVAAVES). 8 N-linked (GlcNAc...) asparagine glycosylation sites follow: N45, N73, N107, N118, N132, N172, N175, and N185. The region spanning 125 to 176 (CPACYESNGTSCHGKPWKCYEEEQCVFLVAELKNDIESKSLVLKGCSNVSNA) is the UPAR/Ly6 domain. N215 carries GPI-anchor amidated asparagine lipidation. Residues 216–237 (VGSKASLYLLALASLLLRGLLP) constitute a propeptide, removed in mature form.

Belongs to the CNF-like-inhibitor family. Highly N-glycosylated. Not O-glycosylated. Post-translationally, GPI-anchored. The GPI-anchor is cleaved, leading to secretion into the colonic lumen. Expressed in the large intestine. Preferentially expressed on the epithelial layer exposed to the lumen (at protein level).

The protein localises to the cell membrane. The protein resides in the secreted. Its function is as follows. Secreted protein specifically required to prevent invasion of Gram-negative bacteria in the inner mucus layer of the colon epithelium, a portion of the large intestine which is free of commensal microbiota. Prevents invasion of flagellated microbiota by binding to the flagellum of bacteria, such as P.mirabilis, thereby inhibiting bacterial motility in the intestinal lumen. Segregation of intestinal bacteria and epithelial cells in the colon is required to preserve intestinal homeostasis. This is Ly6/PLAUR domain-containing protein 8 from Homo sapiens (Human).